We begin with the raw amino-acid sequence, 500 residues long: Glycerol kinase (500 aa).

Position 13 (Thr13) interacts with ADP. The ATP site is built by Thr13, Thr14, and Ser15. Thr13 lines the sn-glycerol 3-phosphate pocket. Arg17 contacts ADP. Arg83, Glu84, and Tyr135 together coordinate sn-glycerol 3-phosphate. Residues Arg83, Glu84, and Tyr135 each coordinate glycerol. His231 bears the Phosphohistidine; by HPr mark. Residue Asp245 participates in sn-glycerol 3-phosphate binding. Positions 245 and 246 each coordinate glycerol. ADP contacts are provided by Thr267 and Gly310. ATP is bound by residues Thr267, Gly310, Gln314, and Gly411. Gly411 and Asn415 together coordinate ADP.

It belongs to the FGGY kinase family. As to quaternary structure, homotetramer and homodimer (in equilibrium). In terms of processing, the phosphoenolpyruvate-dependent sugar phosphotransferase system (PTS), including enzyme I, and histidine-containing protein (HPr) are required for the phosphorylation, which leads to the activation of the enzyme.

It carries out the reaction glycerol + ATP = sn-glycerol 3-phosphate + ADP + H(+). Its pathway is polyol metabolism; glycerol degradation via glycerol kinase pathway; sn-glycerol 3-phosphate from glycerol: step 1/1. With respect to regulation, activated by phosphorylation and inhibited by fructose 1,6-bisphosphate (FBP). Its function is as follows. Key enzyme in the regulation of glycerol uptake and metabolism. Catalyzes the phosphorylation of glycerol to yield sn-glycerol 3-phosphate. This chain is Glycerol kinase, found in Oceanobacillus iheyensis (strain DSM 14371 / CIP 107618 / JCM 11309 / KCTC 3954 / HTE831).